We begin with the raw amino-acid sequence, 246 residues long: UPF0309 protein TTE0306 (246 aa).

An SIS domain is found at 31–212 (ITESLISEDS…EAEIITNMLE (182 aa)).

This sequence belongs to the UPF0309 family.

This chain is UPF0309 protein TTE0306, found in Caldanaerobacter subterraneus subsp. tengcongensis (strain DSM 15242 / JCM 11007 / NBRC 100824 / MB4) (Thermoanaerobacter tengcongensis).